A 433-amino-acid polypeptide reads, in one-letter code: Protein translocase subunit SecY (433 aa).

The next 10 membrane-spanning stretches (helical) occupy residues 17-37 (IIFT…PIAG), 71-91 (IFAL…LMSV), 117-137 (LTVL…ESIV), 141-161 (GPVV…TLVV), 184-204 (LIIF…MFEL), 212-232 (PLVA…IIFF), 268-288 (GVIP…LANF), 309-329 (IYIL…TAIV), 366-386 (LTVV…LLMN), and 388-408 (YVIS…VVLD).

This sequence belongs to the SecY/SEC61-alpha family. Component of the Sec protein translocase complex. Heterotrimer consisting of SecY, SecE and SecG subunits. The heterotrimers can form oligomers, although 1 heterotrimer is thought to be able to translocate proteins. Interacts with the ribosome. Interacts with SecDF, and other proteins may be involved. Interacts with SecA.

Its subcellular location is the cell inner membrane. The central subunit of the protein translocation channel SecYEG. Consists of two halves formed by TMs 1-5 and 6-10. These two domains form a lateral gate at the front which open onto the bilayer between TMs 2 and 7, and are clamped together by SecE at the back. The channel is closed by both a pore ring composed of hydrophobic SecY resides and a short helix (helix 2A) on the extracellular side of the membrane which forms a plug. The plug probably moves laterally to allow the channel to open. The ring and the pore may move independently. This Rickettsia bellii (strain RML369-C) protein is Protein translocase subunit SecY.